A 225-amino-acid chain; its full sequence is Protein-disulfide oxidoreductase DsbI (225 aa).

Residues 27–47 traverse the membrane as a helical segment; sequence FLWLLMAIAMGGLIILAHSFF. A disulfide bond links C56 and C59. 2 consecutive transmembrane segments (helical) span residues 65-85 and 87-107; these read AMFV…NIVL and LIGC…SIKL. A disulfide bridge connects residues C128 and C154. The chain crosses the membrane as a helical span at residues 199-219; that stretch reads CMLAFGLCLILLLVMSGAWAL.

It belongs to the DsbB family. DsbI subfamily. As to quaternary structure, interacts with DsbL.

The protein localises to the cell inner membrane. Its function is as follows. Required for disulfide bond formation in some proteins. Part of a redox system composed of DsbI and DsbL that mediates formation of an essential disulfide bond in AssT. This chain is Protein-disulfide oxidoreductase DsbI, found in Salmonella choleraesuis (strain SC-B67).